Reading from the N-terminus, the 1404-residue chain is MKDLLKFLKQQGKTEEFEGIKIGLASPDLIRSWSFGEVKKPETINYRTFKPEREGLFCARIFGPVKDYECLCGKYKRLKHRGVICEKCGVEVTQTKVRRERMGHIELASPVAHIWFLKSLPSRIGLMLDMTLRDIERVLYFESYVVIEPGMTSLERGQMLTEENYLDALEEYGDEFEAKMGAEAVLDLLRAIDLEKEIEQMREELPSINSETRRKKVTKRLKLIEAFYTSGNKPEWMILKVLPVLPPDLRPLVPLDGGRFATSDLNDLYRRVINRNNRLKRLLDLAAPDIIVRNEKRMLQESVDALLDNGRRGRAITGSNKRPLKSLADMIKGKQGRFRQNLLGKRVDYSGRSVITVGPTLRLHQCGLPKKMALELFKPFIYGKLEGRGLATTIKAAKKMVEREVAEVWDVLDEVIREHPVMLNRAPTLHRLGIQAFEPVLIEGKAIQLHPLVCAAYNADFDGDQMAVHVPLTLEAQLEARALMMSTNNILSPANGEPIIVPSQDVVLGLYYISRERVNGRGEAMAFESVAEAEKAYRVGAAELHARVKVRITETIIGENGERTKQRRIVDTTVGRAILSQILPAGLSFDLVNQDMGKKQISKLLNTCYRQLGLKDTVIFADQLMYTGFQYATISGASVGINDMVIPEEKYSLVADAEAEVIEIQEQFQSGLVTAGERYNKVIDIWASANEKVSKAMMENLSSETVINRHGEEEKQKSFNSIYMMADSGARGSAAQIRQLAGMRGLMAKPDGSIIETPIVANFREGLNVLQYFISTHGARKGLADTALKTANSGYLTRRLVDVAQDLVIIEDDCGATEGLSMKPLIEGGDVVEPLRERVLGRVVAEDVMYPGTDEVLAPRNTLLDEAWCDKLEQHSVDEVQVRSVITCETDFGVCAKCYGRDLARGHIINMGEAIGVVAAQSIGEPGTQLTMRTFHIGGAASRASAENSVQVKNAGTLKLHNAKYVTNSDGKLVIVSRSSELAIIDELGREKERYKVPYGTVLDTKEGAEVNAGQIIANWDPHTHPIITEVAGSIKFVDMIDGVTITRQTDELTGLSSIVVLDVGQRTSAGKEMRPAVRLVDDNGNDLTIPGTDVPAQYFLPGNAIVNLDDNAKISVGDALARIPQESSKTRDITGGLPRVADLFEARRPKEPAILAEISGTISFGKETKGKRRLVITPNDGGDAYEEMIPKWRNLNVFEGEKVERGEVIADGPESAHDILRLRGIHNVANYIVNEVQDVYRLQGVKINDKHIEVIIRQMLRKCIITQAGDSEFLEGEQVEVARVKIANRDLEAAGKQPAKFERELLGITKASLATESFISAASFQETTRVLTEAAVGGKSDNLRGLKENVIVGRLIPAGTGFAYHKNRAKARASGEETAAPTITASEAEQNLADLLNLAGSQE.

Residues cysteine 70, cysteine 72, cysteine 85, and cysteine 88 each contribute to the Zn(2+) site. Residues aspartate 460, aspartate 462, and aspartate 464 each coordinate Mg(2+). 4 residues coordinate Zn(2+): cysteine 814, cysteine 888, cysteine 895, and cysteine 898.

This sequence belongs to the RNA polymerase beta' chain family. In terms of assembly, the RNAP catalytic core consists of 2 alpha, 1 beta, 1 beta' and 1 omega subunit. When a sigma factor is associated with the core the holoenzyme is formed, which can initiate transcription. The cofactor is Mg(2+). Requires Zn(2+) as cofactor.

It carries out the reaction RNA(n) + a ribonucleoside 5'-triphosphate = RNA(n+1) + diphosphate. Its function is as follows. DNA-dependent RNA polymerase catalyzes the transcription of DNA into RNA using the four ribonucleoside triphosphates as substrates. This Shewanella amazonensis (strain ATCC BAA-1098 / SB2B) protein is DNA-directed RNA polymerase subunit beta'.